Here is a 176-residue protein sequence, read N- to C-terminus: ATP synthase subunit d, mitochondrial (176 aa).

In terms of assembly, F-type ATP synthases have 2 components, the catalytic core F(1) and the membrane-embedded component F(0), linked together by a central stalk and a peripheral stalk. The central stalk, also called rotor shaft, is often seen as part of F(1). The peripheral stalk is seen as part of F(0). F(0) contains the membrane channel next to the rotor. F-type ATP synthases form dimers but each monomer functions independently in ATP generation. The dimer consists of 17 different polypeptides: ATP1 (subunit alpha, 3 molecules per monomer, part of F(1)), ATP2 (subunit beta, 3 copies per monomer, part of F(1)), ATP3 (subunit gamma, part of the central stalk), ATP4 (subunit b, part of the peripheral stalk), ATP5/OSCP (subunit 5/OSCP, part of the peripheral stalk), ATP6 (subunit a, part of the peripheral stalk), ATP7 (subunit d, part of the peripheral stalk), ATP8 (subunit 8, part of the peripheral stalk), OLI1 (subunit c, part of the rotor, 10 molecules per monomer), ATP14 (subunit h, part of the peripheral stalk), ATP15 (subunit epsilon, part of the central stalk), ATP16 (subunit delta, part of the central stalk), ATP17 (subunit f, part of the peripheral stalk), ATP18 (subunit i/j, part of the peripheral stalk), ATP19 (subunit k, dimer-specific, at interface between monomers), ATP20 (subunit g, at interface between monomers), TIM11 (subunit e, at interface between monomers).

It is found in the mitochondrion inner membrane. Its function is as follows. Mitochondrial membrane ATP synthase (F(1)F(0) ATP synthase or Complex V) produces ATP from ADP in the presence of a proton gradient across the membrane which is generated by electron transport complexes of the respiratory chain. F-type ATP synthases consist of two structural domains, F(1) - containing the extramembraneous catalytic core, and F(0) - containing the membrane proton channel, linked together by a central stalk and a peripheral stalk. During catalysis, ATP synthesis in the catalytic domain of F(1) is coupled via a rotary mechanism of the central stalk subunits to proton translocation. Part of the complex F(0) domain and the peripheral stalk, which acts as a stator to hold the catalytic alpha/ATP1(3)beta/ATP2(3) subcomplex and subunit a/ATP6 static relative to the rotary elements. This is ATP synthase subunit d, mitochondrial from Yarrowia lipolytica (strain CLIB 122 / E 150) (Yeast).